The chain runs to 177 residues: Ribonuclease alpha-sarcin (177 aa).

A signal peptide spans 1 to 27 (MVAIKNLVLVALTAVTALAVPSPLEAR). Intrachain disulfides connect cysteine 33–cysteine 175 and cysteine 103–cysteine 159. The active site involves histidine 77. Residues 86–119 (DGKLPKGRTPIKFGKSDCDRPPKHSKDGNGKTDH) are disordered. Positions 99–119 (GKSDCDRPPKHSKDGNGKTDH) are enriched in basic and acidic residues. Glutamate 123 (proton acceptor) is an active-site residue. Histidine 164 functions as the Proton donor in the catalytic mechanism.

Belongs to the ribonuclease U2 family.

The protein localises to the secreted. The catalysed reaction is a 28S rRNA containing guanosine-adenosine pair + H2O = an [RNA fragment]-3'-adenosine-3'-phosphate + a 5'-a hydroxy-guanosine-3'-[RNA fragment].. Alpha-sarcin is specific for purines in both single- and double-stranded RNA. Its toxic action on eukaryotic cells is the result of cleavage of a single phosphodiester bond in the 60S subunit of ribosomes. Inhibits both the EFl (elongation factor 1)-dependent binding of aminoacyl-tRNA and the GTP-dependent binding of EF2 (elongation factor 2) to ribosomes. In Aspergillus giganteus, this protein is Ribonuclease alpha-sarcin (sar).